We begin with the raw amino-acid sequence, 177 residues long: Adenine phosphoribosyltransferase (177 aa).

It belongs to the purine/pyrimidine phosphoribosyltransferase family. Homodimer.

The protein resides in the cytoplasm. The catalysed reaction is AMP + diphosphate = 5-phospho-alpha-D-ribose 1-diphosphate + adenine. It functions in the pathway purine metabolism; AMP biosynthesis via salvage pathway; AMP from adenine: step 1/1. Functionally, catalyzes a salvage reaction resulting in the formation of AMP, that is energically less costly than de novo synthesis. The polypeptide is Adenine phosphoribosyltransferase (Leptospira borgpetersenii serovar Hardjo-bovis (strain JB197)).